A 96-amino-acid polypeptide reads, in one-letter code: UPF0235 protein YE3436 (96 aa).

The protein belongs to the UPF0235 family.

The chain is UPF0235 protein YE3436 from Yersinia enterocolitica serotype O:8 / biotype 1B (strain NCTC 13174 / 8081).